A 595-amino-acid polypeptide reads, in one-letter code: Apolipoprotein N-acyltransferase 2 (595 aa).

A run of 5 helical transmembrane segments spans residues F30–F50, L63–I83, V95–F115, A167–F187, and F210–K230. The CN hydrolase domain maps to L241 to V555. E293 functions as the Proton acceptor in the catalytic mechanism. K372 is a catalytic residue. The active-site Nucleophile is the C463. Residues L569 to I589 traverse the membrane as a helical segment.

It belongs to the CN hydrolase family. Apolipoprotein N-acyltransferase subfamily.

The protein localises to the cell inner membrane. The enzyme catalyses N-terminal S-1,2-diacyl-sn-glyceryl-L-cysteinyl-[lipoprotein] + a glycerophospholipid = N-acyl-S-1,2-diacyl-sn-glyceryl-L-cysteinyl-[lipoprotein] + a 2-acyl-sn-glycero-3-phospholipid + H(+). The protein operates within protein modification; lipoprotein biosynthesis (N-acyl transfer). Catalyzes the phospholipid dependent N-acylation of the N-terminal cysteine of apolipoprotein, the last step in lipoprotein maturation. This Leptospira interrogans serogroup Icterohaemorrhagiae serovar copenhageni (strain Fiocruz L1-130) protein is Apolipoprotein N-acyltransferase 2.